A 335-amino-acid chain; its full sequence is Ethanol acetyltransferase 1 (335 aa).

Residues 48–300 form the AB hydrolase-1 domain; sequence PIVFVHGIFG…NSAHDILDQR (253 aa). Catalysis depends on charge relay system residues Ser-121, Asp-145, and His-294.

It belongs to the AB hydrolase superfamily.

It is found in the mitochondrion. The catalysed reaction is ethanol + acetyl-CoA = ethyl acetate + CoA. It catalyses the reaction acetyl-CoA + H2O = acetate + CoA + H(+). It carries out the reaction ethyl acetate + H2O = ethanol + acetate + H(+). In terms of biological role, alcohol acetyltransferase that catalyzes the synthesis of ethyl acetate from ethanol and acetyl-CoA. Can also function as a thioesterase by hydrolyzing acetyl-CoA in the absence of ethanol, as well as esterase hydrolyzing ethyl acetate. This chain is Ethanol acetyltransferase 1 (EAT1), found in Cyberlindnera fabianii (Yeast).